The following is a 321-amino-acid chain: Beta-ketoacyl-[acyl-carrier-protein] synthase III (321 aa).

Active-site residues include cysteine 115 and histidine 248. Positions 249 to 253 (QANIR) are ACP-binding. Residue asparagine 278 is part of the active site.

The protein belongs to the thiolase-like superfamily. FabH family. In terms of assembly, homodimer.

Its subcellular location is the cytoplasm. The enzyme catalyses malonyl-[ACP] + acetyl-CoA + H(+) = 3-oxobutanoyl-[ACP] + CO2 + CoA. Its pathway is lipid metabolism; fatty acid biosynthesis. Its function is as follows. Catalyzes the condensation reaction of fatty acid synthesis by the addition to an acyl acceptor of two carbons from malonyl-ACP. Catalyzes the first condensation reaction which initiates fatty acid synthesis and may therefore play a role in governing the total rate of fatty acid production. Possesses both acetoacetyl-ACP synthase and acetyl transacylase activities. Its substrate specificity determines the biosynthesis of branched-chain and/or straight-chain of fatty acids. This chain is Beta-ketoacyl-[acyl-carrier-protein] synthase III, found in Aromatoleum aromaticum (strain DSM 19018 / LMG 30748 / EbN1) (Azoarcus sp. (strain EbN1)).